The primary structure comprises 82 residues: Protein transport protein Sec61 subunit beta (82 aa).

Met1 carries the post-translational modification N-acetylmethionine. The disordered stretch occupies residues 1–34 (MVGSGAPQRGSAAATASMRRRKPTSGAGGGGASG). The Cytoplasmic segment spans residues 1–55 (MVGSGAPQRGSAAATASMRRRKPTSGAGGGGASGGAAGSMLQFYTDDAPGLKISP). The chain crosses the membrane as a helical span at residues 56-76 (NVVLIMSIGFIAFVAVLHVMG).

This sequence belongs to the SEC61-beta family. In terms of assembly, heterotrimeric complex composed of SEC61-alpha, SEC61-beta and SEC61-gamma.

Its subcellular location is the endoplasmic reticulum membrane. Necessary for protein translocation in the endoplasmic reticulum. The sequence is that of Protein transport protein Sec61 subunit beta from Arabidopsis thaliana (Mouse-ear cress).